Here is a 254-residue protein sequence, read N- to C-terminus: Phosphate import ATP-binding protein PstB (254 aa).

In terms of domain architecture, ABC transporter spans 7-249; it reads MVAESMSFYY…PREKQTEDYI (243 aa). 39–46 is a binding site for ATP; sequence GPSGCGKS.

This sequence belongs to the ABC transporter superfamily. Phosphate importer (TC 3.A.1.7) family. The complex is composed of two ATP-binding proteins (PstB), two transmembrane proteins (PstC and PstA) and a solute-binding protein (PstS).

The protein resides in the cell inner membrane. It catalyses the reaction phosphate(out) + ATP + H2O = ADP + 2 phosphate(in) + H(+). Functionally, part of the ABC transporter complex PstSACB involved in phosphate import. Responsible for energy coupling to the transport system. This is Phosphate import ATP-binding protein PstB from Chlorobium chlorochromatii (strain CaD3).